Consider the following 395-residue polypeptide: Elongation factor Tu (395 aa).

A tr-type G domain is found at 6–205 (KPHINVGTIG…NALEKIDLPI (200 aa)). A G1 region spans residues 15-22 (GHVDHGKT). Residue 15–22 (GHVDHGKT) coordinates GTP. Threonine 22 contacts Mg(2+). Positions 59–63 (GITIS) are G2. The G3 stretch occupies residues 80 to 83 (DCPG). GTP contacts are provided by residues 80–84 (DCPGH) and 135–138 (NKCD). The tract at residues 135-138 (NKCD) is G4. The segment at 173-175 (SAV) is G5.

The protein belongs to the TRAFAC class translation factor GTPase superfamily. Classic translation factor GTPase family. EF-Tu/EF-1A subfamily. In terms of assembly, monomer.

The protein localises to the cytoplasm. It catalyses the reaction GTP + H2O = GDP + phosphate + H(+). In terms of biological role, GTP hydrolase that promotes the GTP-dependent binding of aminoacyl-tRNA to the A-site of ribosomes during protein biosynthesis. The chain is Elongation factor Tu from Ehrlichia ruminantium (strain Gardel).